Consider the following 210-residue polypeptide: Cytochrome c biogenesis ATP-binding export protein CcmA (210 aa).

The ABC transporter domain maps to 4-208; the sequence is VPTLSFSKLG…GAIPAQLLEL (205 aa). 39–46 is a binding site for ATP; sequence GANGVGKT.

This sequence belongs to the ABC transporter superfamily. CcmA exporter (TC 3.A.1.107) family. As to quaternary structure, the complex is composed of two ATP-binding proteins (CcmA) and two transmembrane proteins (CcmB).

The protein localises to the cell inner membrane. The catalysed reaction is heme b(in) + ATP + H2O = heme b(out) + ADP + phosphate + H(+). In terms of biological role, part of the ABC transporter complex CcmAB involved in the biogenesis of c-type cytochromes; once thought to export heme, this seems not to be the case, but its exact role is uncertain. Responsible for energy coupling to the transport system. The protein is Cytochrome c biogenesis ATP-binding export protein CcmA of Albidiferax ferrireducens (strain ATCC BAA-621 / DSM 15236 / T118) (Rhodoferax ferrireducens).